The primary structure comprises 66 residues: Putative antitoxin APE_0279a.1 (66 aa).

The protein belongs to the UPF0165 family.

Possibly the antitoxin component of a type II toxin-antitoxin (TA) system. This Aeropyrum pernix (strain ATCC 700893 / DSM 11879 / JCM 9820 / NBRC 100138 / K1) protein is Putative antitoxin APE_0279a.1.